The primary structure comprises 153 residues: Deoxyuridine 5'-triphosphate nucleotidohydrolase (153 aa).

Residues 71-73 (RSG), N84, 88-90 (TID), and K98 each bind substrate.

It belongs to the dUTPase family. Mg(2+) is required as a cofactor.

The enzyme catalyses dUTP + H2O = dUMP + diphosphate + H(+). Its pathway is pyrimidine metabolism; dUMP biosynthesis; dUMP from dCTP (dUTP route): step 2/2. Functionally, this enzyme is involved in nucleotide metabolism: it produces dUMP, the immediate precursor of thymidine nucleotides and it decreases the intracellular concentration of dUTP so that uracil cannot be incorporated into DNA. This Ehrlichia canis (strain Jake) protein is Deoxyuridine 5'-triphosphate nucleotidohydrolase.